A 282-amino-acid chain; its full sequence is NADPH-dependent 7-cyano-7-deazaguanine reductase (282 aa).

82-84 (IES) contacts substrate. 84-85 (SK) serves as a coordination point for NADPH. The active-site Thioimide intermediate is Cys-189. Asp-196 (proton donor) is an active-site residue. 228–229 (HE) is a binding site for substrate. 257–258 (RG) contacts NADPH.

This sequence belongs to the GTP cyclohydrolase I family. QueF type 2 subfamily. In terms of assembly, homodimer.

The protein localises to the cytoplasm. The enzyme catalyses 7-aminomethyl-7-carbaguanine + 2 NADP(+) = 7-cyano-7-deazaguanine + 2 NADPH + 3 H(+). Its pathway is tRNA modification; tRNA-queuosine biosynthesis. Catalyzes the NADPH-dependent reduction of 7-cyano-7-deazaguanine (preQ0) to 7-aminomethyl-7-deazaguanine (preQ1). The chain is NADPH-dependent 7-cyano-7-deazaguanine reductase from Delftia acidovorans (strain DSM 14801 / SPH-1).